The sequence spans 78 residues: NAD(P)H-quinone oxidoreductase subunit O (78 aa).

It belongs to the complex I NdhO subunit family. In terms of assembly, NDH-1 can be composed of about 15 different subunits; different subcomplexes with different compositions have been identified which probably have different functions.

The protein localises to the cellular thylakoid membrane. The catalysed reaction is a plastoquinone + NADH + (n+1) H(+)(in) = a plastoquinol + NAD(+) + n H(+)(out). It catalyses the reaction a plastoquinone + NADPH + (n+1) H(+)(in) = a plastoquinol + NADP(+) + n H(+)(out). Functionally, NDH-1 shuttles electrons from an unknown electron donor, via FMN and iron-sulfur (Fe-S) centers, to quinones in the respiratory and/or the photosynthetic chain. The immediate electron acceptor for the enzyme in this species is believed to be plastoquinone. Couples the redox reaction to proton translocation, and thus conserves the redox energy in a proton gradient. Cyanobacterial NDH-1 also plays a role in inorganic carbon-concentration. The protein is NAD(P)H-quinone oxidoreductase subunit O of Prochlorococcus marinus (strain MIT 9312).